The sequence spans 817 residues: MAHLLLHGTLEATILEADHLSNPTRATGAAPGIFRKFVEGFEDSLGLGKGATRLYATIDLGRARVGRTRVVDDEPVNPRWYEVFHIYCAHFAADVVFSVKAAQPIGATLIGRAYLPVRELLSGEAIERRLDILDAGRRRISHGPTIHVRLQFRDVAGDRHGWGRGVSGARYPGVPYTFFSQRPGCRVTLYQDAHVPDAFAPRIPLAGGGYYRQGRCWEDVFDAISNAKHLIYLTGWSVYTEITLIRDGTRQRPGGDATLGELLKRKASEGVRVLLLVWDDRTSVESLGMKWGFMSTHDAETADYFRGTDVRCVLCPRNPDAGRSAIMGAQIAYMITHHQKTVIVDHDMPVPRGGGSRRIVSFVGGLDLCDGRYDTQFHSLFRTLDTAHHSDFHQPNLDGAAVTKGGPREPWHDIHSKIEGPAAWDVLYNFEQRWRKQGGDKDLLLDLKAMADLIIPPSPVMFPDDGEAWSVQLFRSIDGGACFGFPSTPEAAARSGLVSGKNNTIDRSIQDAYIHAIRRAKNFIYIENQYFLGSSFAWKADGIRPEDIEALHLIPREISLKIVNKIEAGERFAVYVVLPMWPEGPPASGSVQAILDWQRRTMEMMYYDIAVALEAKRINADPRDYLTFFCLGNREVKLNGEYEPAGRPLDGTDYAKAQKARRFMIYVHSKMMIVDDEYIIVGSANINQRSMDGGRDSEIAMGAFQPCHLNTKGLVARGQIHGFRMSLWYEHLGMLHDNFLNPESLECVQRVNKMADKYWDLYASDELNDDLPGHLLTYPVRVTKEGTVTELPGAKFFPDTQAPVIGTKGNLPPFLTT.

In terms of domain architecture, C2 spans 1 to 130 (MAHLLLHGTL…LSGEAIERRL (130 aa)). A Ca(2+)-binding site is contributed by Asp192. The 40-residue stretch at 333–372 (YMITHHQKTVIVDHDMPVPRGGGSRRIVSFVGGLDLCDGR) folds into the PLD phosphodiesterase 1 domain. Residues His338, Lys340, and Asp345 contribute to the active site. His338 lines the a 1,2-diacyl-sn-glycero-3-phosphate pocket. His378 and His412 together coordinate Ca(2+). The a 1,2-diacyl-sn-glycero-3-phosphate site is built by Gln529 and His668. Residues 663–690 (FMIYVHSKMMIVDDEYIIVGSANINQRS) form the PLD phosphodiesterase 2 domain. Active-site residues include His668, Lys670, and Asp675. Glu730 serves as a coordination point for Ca(2+).

This sequence belongs to the phospholipase D family. C2-PLD subfamily. The cofactor is Ca(2+).

It carries out the reaction a 1,2-diacyl-sn-glycero-3-phosphocholine + H2O = a 1,2-diacyl-sn-glycero-3-phosphate + choline + H(+). In terms of biological role, hydrolyzes glycerol-phospholipids at the terminal phosphodiesteric bond. Plays an important role in various cellular processes. This is Phospholipase D alpha 2 (PLD2) from Oryza sativa subsp. japonica (Rice).